The sequence spans 370 residues: 3 beta-hydroxysteroid dehydrogenase/Delta 5--&gt;4-isomerase (370 aa).

Residue Tyr158 is the Proton acceptor of the active site. Lys162 lines the NAD(+) pocket.

The protein belongs to the 3-beta-HSD family. Monomer.

Its subcellular location is the cytoplasm. It carries out the reaction a 3beta-hydroxy-Delta(5)-steroid + NAD(+) = a 3-oxo-Delta(5)-steroid + NADH + H(+). It catalyses the reaction cholesterol + NAD(+) = cholest-5-en-3-one + NADH + H(+). The catalysed reaction is pregnenolone + NAD(+) = pregn-5-ene-3,20-dione + NADH + H(+). The enzyme catalyses 3beta-hydroxyandrost-5-en-17-one + NAD(+) = androst-5-ene-3,17-dione + NADH + H(+). It carries out the reaction a 3-oxo-Delta(5)-steroid = a 3-oxo-Delta(4)-steroid. It catalyses the reaction cholest-5-en-3-one = cholest-4-en-3-one. The catalysed reaction is pregn-5-ene-3,20-dione = progesterone. The enzyme catalyses androst-5-ene-3,17-dione = androst-4-ene-3,17-dione. It functions in the pathway lipid metabolism; steroid biosynthesis. 3-beta-HSD is a bifunctional enzyme, that catalyzes the oxidation and isomerization of cholesterol, pregnenolone, and dehydroepiandrosterone (DHEA) into cholest-4-en-3-one, progesterone, and androsterone, respectively. The polypeptide is 3 beta-hydroxysteroid dehydrogenase/Delta 5--&gt;4-isomerase (Mycobacterium tuberculosis (strain CDC 1551 / Oshkosh)).